The chain runs to 350 residues: tRNA uridine(34) hydroxylase (350 aa).

One can recognise a Rhodanese domain in the interval 146–240 (DDPDAVFIDM…YARRAREQGL (95 aa)). Residue cysteine 200 is the Cysteine persulfide intermediate of the active site. The span at 319–328 (RRRRAGRENG) shows a compositional bias: basic and acidic residues. The disordered stretch occupies residues 319-350 (RRRRAGRENGNKIFNKSRGRLNSKLSIPDPAE).

It belongs to the TrhO family.

The enzyme catalyses uridine(34) in tRNA + AH2 + O2 = 5-hydroxyuridine(34) in tRNA + A + H2O. Its function is as follows. Catalyzes oxygen-dependent 5-hydroxyuridine (ho5U) modification at position 34 in tRNAs. In Salmonella dublin (strain CT_02021853), this protein is tRNA uridine(34) hydroxylase.